We begin with the raw amino-acid sequence, 948 residues long: ELKS/Rab6-interacting/CAST family member 1 (948 aa).

Residues 1 to 54 are disordered; sequence MYGSARSVGKVEPSSQSPGRSPRLPRSPRLGHRRTNSTGGSSGNSVGGGSGKTL. At Lys-10 the chain carries N6-acetyllysine. Residues 13-28 are compositionally biased toward low complexity; the sequence is PSSQSPGRSPRLPRSP. Residues Ser-17, Ser-21, and Ser-37 each carry the phosphoserine modification. Thr-38 carries the post-translational modification Phosphothreonine. Residues 40–51 are compositionally biased toward gly residues; it reads GSSGNSVGGGSG. Phosphoserine occurs at positions 55, 75, 94, 796, and 937. Positions 144–920 form a coiled coil; sequence RQARDNTIMD…RMKLMADNYE (777 aa). Residues 773–796 show a composition bias toward basic and acidic residues; the sequence is KHKEQVEKKKSAQMLEEARRREDS. Disordered stretches follow at residues 773–801 and 903–948; these read KHKE…SDSS and QLKQ…GIWA. Positions 939-948 are enriched in acidic residues; it reads DQDEEEGIWA.

Interacts with the GTB-bound forms of RAB6A isoform 1 and isoform 2 and with RAB6B. The interaction was strongest with RAB6B, followed by RAB6A isoform 2 and weakest with RAB6A isoform 1. Part of a complex with CHUK, IKBKB and IKBKG. Interacts with CHUK, IKBKB and IKBKG. The interaction with IKBKG is independent of CHUK and IKBKB. Interacts with NFKBIA. Isoform 1 interacts through its C-terminus with the PDZ domains of RIMS1 and RIMS2. Interacts with ERC2/CAST1. Interacts with SDCCAG8. Part of a cortical microtubule stabilization complex (CMSC) composed of KANK1, PPFIA1, PPFIBP1, ERC1/ELKS, PHLDB2/LL5beta, CLASPs, KIF21A and possibly additional interactors; within CMSCs KANK1 and PHLDB2/LL5beta appear to be the core components for targeting of microtubule-binding proteins KIF21A and CLASPs, whereas PPFIA1, PPFIBP1 and ERC1/ELKS serve as scaffolds for protein clustering. Isoform 1 is specifically expressed in brain. A further probable isoform is widely expressed outside of brain It is referred to as ERC1a by PubMed:12391317 and characterized by a C-terminus identical to that of isoforms 1 in human and mouse.

Its subcellular location is the cytoplasm. It is found in the cytoskeleton. The protein resides in the microtubule organizing center. The protein localises to the centrosome. It localises to the membrane. Its subcellular location is the golgi apparatus membrane. It is found in the presynaptic active zone. The protein resides in the cell projection. The protein localises to the podosome. Functionally, regulatory subunit of the IKK complex. Probably recruits IkappaBalpha/NFKBIA to the complex. May be involved in the organization of the cytomatrix at the nerve terminals active zone (CAZ) which regulates neurotransmitter release. May be involved in vesicle trafficking at the CAZ. May be involved in Rab-6 regulated endosomes to Golgi transport. The protein is ELKS/Rab6-interacting/CAST family member 1 (Erc1) of Rattus norvegicus (Rat).